A 292-amino-acid polypeptide reads, in one-letter code: Shikimate dehydrogenase (NADP(+)) (292 aa).

Residues serine 22 to serine 24 and serine 69 each bind shikimate. The active-site Proton acceptor is the lysine 73. Shikimate is bound by residues asparagine 94 and aspartate 111. Residues glycine 135–alanine 139 and isoleucine 236 contribute to the NADP(+) site. Tyrosine 238 serves as a coordination point for shikimate. Glycine 260 is an NADP(+) binding site.

Belongs to the shikimate dehydrogenase family. Homodimer.

It catalyses the reaction shikimate + NADP(+) = 3-dehydroshikimate + NADPH + H(+). Its pathway is metabolic intermediate biosynthesis; chorismate biosynthesis; chorismate from D-erythrose 4-phosphate and phosphoenolpyruvate: step 4/7. In terms of biological role, involved in the biosynthesis of the chorismate, which leads to the biosynthesis of aromatic amino acids. Catalyzes the reversible NADPH linked reduction of 3-dehydroshikimate (DHSA) to yield shikimate (SA). The chain is Shikimate dehydrogenase (NADP(+)) from Streptococcus pyogenes serotype M3 (strain ATCC BAA-595 / MGAS315).